Consider the following 297-residue polypeptide: MSDFDFTQRFLFDDTDVRGELADLRGSYAEVLAKHPYPEPVAQLLGEMLAAAALLVGTLKFDGLLVLQARSPGPIPLLMVECSSEREVRGIARYHAEQVEPGAGLRELMPEGLLTLTIDPRRGQRYQGIVELRGESLADCLSGYFADSEQLPTRFWLNADGRRARGLLLQQLPADRLKDAEARTLNWEHLVTLADTLTAEELLGLDNETLLRRLYHQEAVRLFEPLPLRFRCSCSRERSANALSSLGQADAEQLLRERDGLVVVDCQFCNQRYEFDATDIAQLFAGGGSGAPSATRH.

Disulfide bonds link Cys-232–Cys-234 and Cys-266–Cys-269.

Belongs to the HSP33 family. Under oxidizing conditions two disulfide bonds are formed involving the reactive cysteines. Under reducing conditions zinc is bound to the reactive cysteines and the protein is inactive.

It localises to the cytoplasm. Functionally, redox regulated molecular chaperone. Protects both thermally unfolding and oxidatively damaged proteins from irreversible aggregation. Plays an important role in the bacterial defense system toward oxidative stress. The chain is 33 kDa chaperonin from Azotobacter vinelandii (strain DJ / ATCC BAA-1303).